A 670-amino-acid polypeptide reads, in one-letter code: Protein angel homolog 1 (670 aa).

Phosphoserine is present on residues serine 77 and serine 105.

It belongs to the CCR4/nocturin family.

In Homo sapiens (Human), this protein is Protein angel homolog 1 (ANGEL1).